A 285-amino-acid polypeptide reads, in one-letter code: tRNA (cytidine(32)/guanosine(34)-2'-O)-methyltransferase (285 aa).

Residues Gly-53, Trp-55, Asp-83, Asp-99, and Asp-124 each coordinate S-adenosyl-L-methionine. Lys-164 functions as the Proton acceptor in the catalytic mechanism.

It belongs to the class I-like SAM-binding methyltransferase superfamily. RNA methyltransferase RlmE family. TRM7 subfamily.

The protein localises to the cytoplasm. It carries out the reaction cytidine(32)/guanosine(34) in tRNA + 2 S-adenosyl-L-methionine = 2'-O-methylcytidine(32)/2'-O-methylguanosine(34) in tRNA + 2 S-adenosyl-L-homocysteine + 2 H(+). In terms of biological role, methylates the 2'-O-ribose of nucleotides at positions 32 and 34 of the tRNA anticodon loop of substrate tRNAs. Requires trm732 for methylation of the cytidine at position 32 of the anticodon loop of substrate tRNAs. Requires trm734 for methylation of the nucleotide at position 34 of the anticodon loop of substrate tRNAs. Methylates tRNA(Phe). This is tRNA (cytidine(32)/guanosine(34)-2'-O)-methyltransferase from Schizosaccharomyces pombe (strain 972 / ATCC 24843) (Fission yeast).